The chain runs to 684 residues: MVGPEDAGQGAVYRCGEERHGLTDAADEEEGEGEAGDRQTDILQLYISRPAIKMTNGDLNYLPQGGAGEGDMPSAGDMHSLSTHKEDIKQPNGGLLVADSTRPQGCACHRQCCSLSEAVPSPGTPPGSSPISSSSSSPVSARTVAGYFVSEEADRFRFLDVSRQSCRNTFEGSRRQSAPDHLADGLSLPAESPGTAEQDGDRPWKVGIAEFFSRNFFSKRTKDPKSSSSVPGWKLFGKVPPRETAQKDSKIIQQDDSSGSLSSVSTPNLLNTGEYEARTGRSCKAPSQSTRKKKFEFEPLSTTALILEDRPSNLPAKSVHETLRHRQEYDEMVAEAKKREVKEAQRRKKLMKERIRQEENIASAMVIWNTEILPNWDVMRSTRRVRDLWWQGLPPSIRGKVWSLAIGNELNITPELYEIFLSRAKERWKSFSETNSENENEDAGASLADREASLELIKLDISRTFPSLYIFQKGGPYHDLLHSILGAYTCYRPDVGYVQGMSFIAAVLILNLEEADAFIAFANLLNKPCQLAFFRVDHSMMLKYFAAFEVFFEENLPKLFFHFNAYSLTPDLYLIDWIFTLYSKSLPLDLACRVWDVFCRDGEEFLFRTALGILRLYEDILLQMDFIHIAQFLTKLPEDITSEKLFGCIAAIQMQNSNKKWTQVFTSLMKDYKEGDKMSQASKT.

Disordered stretches follow at residues Met1 to Asp41, Val119 to Pro138, Thr169 to Arg202, and Lys219 to Thr290. Over residues Ala25–Glu34 the composition is skewed to acidic residues. The span at Ser129–Pro138 shows a compositional bias: low complexity. 2 stretches are compositionally biased toward basic and acidic residues: residues Gly172–Ala183 and Pro240–Lys250. Residues Glu331 to Met365 are a coiled coil. Positions Gly392–Gly602 constitute a Rab-GAP TBC domain.

Its function is as follows. May act as a GTPase-activating protein for Rab family protein(s). The protein is TBC1 domain family member 12 (tbc1d12) of Xenopus tropicalis (Western clawed frog).